A 223-amino-acid polypeptide reads, in one-letter code: Ribose-5-phosphate isomerase A (223 aa).

Substrate-binding positions include 32 to 35 (TGST), 85 to 88 (DGAD), and 98 to 101 (KGGG). The active-site Proton acceptor is Glu107. Residue Lys125 coordinates substrate.

This sequence belongs to the ribose 5-phosphate isomerase family. Homodimer.

It catalyses the reaction aldehydo-D-ribose 5-phosphate = D-ribulose 5-phosphate. It participates in carbohydrate degradation; pentose phosphate pathway; D-ribose 5-phosphate from D-ribulose 5-phosphate (non-oxidative stage): step 1/1. Catalyzes the reversible conversion of ribose-5-phosphate to ribulose 5-phosphate. The polypeptide is Ribose-5-phosphate isomerase A (Pseudomonas paraeruginosa (strain DSM 24068 / PA7) (Pseudomonas aeruginosa (strain PA7))).